The chain runs to 254 residues: Winged helix repair factor 1 (254 aa).

The Bipartite nuclear localization signal motif lies at 4 to 21; that stretch reads KRRLLASEAFGVKRRRAP. Winged helix domain stretches follow at residues 32-104, 120-179, and 180-254; these read RAGS…GIVF, PCAG…LAVP, and GAGR…LPDT.

The protein belongs to the STK19 family. In terms of assembly, monomer in solution. Homodimer; when bound to DNA. Component of a transcription-coupled nucleotide excision repair (TC-NER) complex composed of STK19, ERCC6, ERCC8, DDA1, DDB1, ELOF1 and UVSSA which assembles and interacts with the multiprotein RNA polymerase II complex when it stalls at DNA lesions.

It localises to the nucleus. DNA-binding protein which is required for efficient transcription-coupled nucleotide excision repair (TC-NER). Acts as part of a TC-NER complex which assembles and interacts with RNA polymerase II (RNAPII) when it stalls at DNA lesions. TC-NER complex subunit UVSSA binds to the GTF2H1/p62 subunit of the TFIIH transcription factor complex, tethering TFIIH to the TC-NER complex. WHR1/STK19 then interacts with the XPD helicase subunit of TFIIH which guides TFIIH to DNA downstream of the stalled RNAPII, ensuring DNA repair. Directly interacts with RNAPII and also binds to downstream DNA. Promotes the timely removal of DNA damage-stalled RNAPII, allowing downstream NER factors to access DNA lesions. Required for monoubiquitination of UVSSA. Regulates repositioning and stabilization of UVSSA within the TC-NER complex. Stimulates ubiquitination of RNAPII complex member RBP1. Also binds to RNA and regulates the expression levels of many mRNAs. The protein is Winged helix repair factor 1 of Mus musculus (Mouse).